We begin with the raw amino-acid sequence, 221 residues long: Oligoribonuclease (221 aa).

An Exonuclease domain is found at 21 to 186 (LVWVDLEMTG…ADIVESIREL (166 aa)). Residue Y143 is part of the active site.

It belongs to the oligoribonuclease family.

It localises to the cytoplasm. Functionally, 3'-to-5' exoribonuclease specific for small oligoribonucleotides. The chain is Oligoribonuclease from Corynebacterium efficiens (strain DSM 44549 / YS-314 / AJ 12310 / JCM 11189 / NBRC 100395).